Consider the following 132-residue polypeptide: Small ribosomal subunit protein uS8 (132 aa).

Belongs to the universal ribosomal protein uS8 family. Part of the 30S ribosomal subunit. Contacts proteins S5 and S12.

In terms of biological role, one of the primary rRNA binding proteins, it binds directly to 16S rRNA central domain where it helps coordinate assembly of the platform of the 30S subunit. The sequence is that of Small ribosomal subunit protein uS8 from Lactococcus lactis subsp. cremoris (strain MG1363).